The primary structure comprises 200 residues: NAD(P)H dehydrogenase (quinone) (200 aa).

The Flavodoxin-like domain maps to 4-191 (VLVLYYSSYG…DIARYQGKRV (188 aa)). Residues 10 to 15 (SSYGHV) and 79 to 81 (TRF) contribute to the FMN site. Tyr12 lines the NAD(+) pocket. Trp99 contributes to the substrate binding site. FMN contacts are provided by residues 114 to 120 (STGTQHG) and His135.

The protein belongs to the WrbA family. It depends on FMN as a cofactor.

The catalysed reaction is a quinone + NADH + H(+) = a quinol + NAD(+). The enzyme catalyses a quinone + NADPH + H(+) = a quinol + NADP(+). This is NAD(P)H dehydrogenase (quinone) from Burkholderia lata (strain ATCC 17760 / DSM 23089 / LMG 22485 / NCIMB 9086 / R18194 / 383).